A 315-amino-acid polypeptide reads, in one-letter code: MAEQRLPVPRLRGVSREQFMEHLYPQRKPLVLEGLDLGSCTSKWTVDYLSQVGGTKEVKIHVAAVPQMDFISKNFVYRTLPFNKLVQRAAEETHKEFFISEDEKYYLRSLGEDPRKDVADIRQQFPSLGGDITFPMFFREEQFFSSVFRISSPGLQLWTHYDVMDNFLIQVTGKKRITLFNPRDAQYLYLSGSKSEVLNIDSPDLDKYPLFPKARRYECSLEAGDVLFIPALWFHNVVSEEFGVGVNIFWKHLPSECYDTTDTYGNKDPVAASRAVQILDRALKTLAELPEEYRDFYARQMVLRIQDKAYSKNFE.

The 166-residue stretch at 102-267 (DEKYYLRSLG…YDTTDTYGNK (166 aa)) folds into the JmjC domain. Tyr-106 is a 2-oxoglutarate binding site. His-160 and Asp-162 together coordinate Fe cation. 2-oxoglutarate-binding residues include Asn-166 and Lys-175. Residue His-235 coordinates Fe cation.

It belongs to the TYW5 family. In terms of assembly, homodimer. Requires Fe(2+) as cofactor.

The enzyme catalyses 7-[(3S)-3-amino-3-carboxypropyl]wyosine(37) in tRNA(Phe) + 2-oxoglutarate + O2 = 7-(2-hydroxy-3-amino-3-carboxypropyl)wyosine(37) in tRNA(Phe) + succinate + CO2. The protein operates within tRNA modification; wybutosine-tRNA(Phe) biosynthesis. In terms of biological role, tRNA hydroxylase that acts as a component of the wybutosine biosynthesis pathway. Wybutosine is a hyper modified guanosine with a tricyclic base found at the 3'-position adjacent to the anticodon of eukaryotic phenylalanine tRNA. Catalyzes the hydroxylation of 7-(a-amino-a-carboxypropyl)wyosine (yW-72) into undermodified hydroxywybutosine (OHyW*). OHyW* being further transformed into hydroxywybutosine (OHyW) by LCMT2/TYW4. OHyW is a derivative of wybutosine found in higher eukaryotes. The polypeptide is tRNA wybutosine-synthesizing protein 5 (Tyw5) (Mus musculus (Mouse)).